The chain runs to 142 residues: uncharacterized protein (142 aa).

The protein localises to the mitochondrion. This is an uncharacterized protein from Mus musculus (Mouse).